A 273-amino-acid chain; its full sequence is MEIKTFLECALKEDLGHGDLFERVLEKDFKATAFVRAKQEGVFSGEKYALELLQMTGIECVQNIKDKERFKPKDTLMEIRGDFSMLLKIERTLLNLLQHSSGIATLTSRFVEALNSPKVRLLDTRKTRPLLRIFEKYSVLNGGASNHRLGLDDALMLKDTHLKHVKDLKSFLTHARKNLPFTAKIEIECESFEEAKNAMSAGADIVMCDNMSVGETKEIAAYREAHYPFVLLEASGNISLESINAYAKSGVDAISVGALIHQATFIDMHMKMA.

Substrate is bound by residues R91, 124 to 126 (TRK), R148, K158, E188, D209, 235 to 237 (SGN), and 256 to 258 (VGA).

Belongs to the NadC/ModD family. As to quaternary structure, hexamer formed by 3 homodimers.

It catalyses the reaction nicotinate beta-D-ribonucleotide + CO2 + diphosphate = quinolinate + 5-phospho-alpha-D-ribose 1-diphosphate + 2 H(+). It functions in the pathway cofactor biosynthesis; NAD(+) biosynthesis; nicotinate D-ribonucleotide from quinolinate: step 1/1. Involved in the catabolism of quinolinic acid (QA). The chain is Probable nicotinate-nucleotide pyrophosphorylase [carboxylating] (nadC) from Helicobacter pylori (strain J99 / ATCC 700824) (Campylobacter pylori J99).